Here is a 506-residue protein sequence, read N- to C-terminus: CDK5 regulatory subunit-associated protein 3 (506 aa).

3 consecutive short sequence motifs (shuffled ATG8-binding motif) follow at residues 267 to 270 (IDWG), 292 to 295 (IDWG), and 310 to 313 (IDWG). Residues 269-506 (WGDFGVEAVS…RPVNLMGTSL (238 aa)) form a required for interaction with UFL1 and mediates interaction with CHEK1 region. The interval 355 to 370 (DELMELEIFLARRAVE) is RPL10a-binding domain (RBD). Residue K450 forms a Glycyl lysine isopeptide (Lys-Gly) (interchain with G-Cter in SUMO2) linkage.

This sequence belongs to the CDK5RAP3 family. In terms of assembly, substrate adapter component of the UFM1 ribosome E3 ligase (UREL) complex, composed of UFL1, DDRGK1 and CDK5RAP3. Interaction with UFL1 anchors CDK5RAP3 in the cytoplasm, preventing its translocation to the nucleus which allows expression of the CCND1 cyclin and progression of cells through the G1/S transition. Interacts with ATG8 family proteins MAP1LC3A, MAP1LC3B, GABARAP, GABARAPL1 and GABARAPL2. Interacts with CDK5R1; competes with CDK5RAP1 and CDK5RAP2. Interacts with RELA. Interacts with CHEK1; may negatively regulate CHEK1 and thereby stimulate entry into mitosis. Interacts with CDKN2A/ARF and MDM2; forms a ternary complex involved in regulation of p53/TP53. Interacts with MAPK14. Interacts with CCNB1. Interacts with TUBG1; may regulate CDK5RAP3 in mitotic G2/M transition checkpoint. May be phosphorylated by CDK5. Post-translationally, ubiquitinated. Probably triggers proteasomal degradation and is negatively regulated by UFL1. In terms of processing, may be ufmylated. Cleaved by caspases early during apoptosis, the resulting peptides may play a role in rupture of the nuclear envelope.

The protein localises to the endoplasmic reticulum membrane. The protein resides in the cytoplasm. It localises to the nucleus. Its subcellular location is the cytoskeleton. It is found in the microtubule organizing center. The protein localises to the centrosome. Its function is as follows. Substrate adapter of E3 ligase complexes mediating ufmylation, the covalent attachment of the ubiquitin-like modifier UFM1 to substrate proteins, and which is involved in various processes, such as ribosome recycling and reticulophagy (also called ER-phagy). As part of the UREL complex, plays a key role in ribosome recycling by promoting mono-ufmylation of RPL26/uL24 subunit of the 60S ribosome. Ufmylation of RPL26/uL24 occurs on free 60S ribosomes following ribosome dissociation: it weakens the junction between post-termination 60S subunits and SEC61 translocons, promoting release and recycling of the large ribosomal subunit from the endoplasmic reticulum membrane. Ufmylation of RPL26/uL24 and subsequent 60S ribosome recycling either take place after normal termination of translation or after ribosome stalling during cotranslational translocation at the endoplasmic reticulum. Within the UREL complex, CDK5RAP3 acts as a substrate adapter that constrains UFL1 ligase activity to mono-ufmylate RPL26/uL24 at 'Lys-134'. The UREL complex is also involved in reticulophagy in response to endoplasmic reticulum stress by promoting ufmylation of proteins such as CYB5R3, thereby promoting lysosomal degradation of ufmylated proteins. Also acts as a regulator of transcription: negatively regulates NF-kappa-B-mediated gene transcription through the control of RELA phosphorylation. Also regulates mitotic G2/M transition checkpoint and mitotic G2 DNA damage checkpoint. Through its interaction with CDKN2A/ARF and MDM2 may induce MDM2-dependent p53/TP53 ubiquitination, stabilization and activation in the nucleus, thereby promoting G1 cell cycle arrest and inhibition of cell proliferation. May also play a role in the rupture of the nuclear envelope during apoptosis. May regulate MAPK14 activity by regulating its dephosphorylation by PPM1D/WIP1. Required for liver development. The sequence is that of CDK5 regulatory subunit-associated protein 3 from Pongo abelii (Sumatran orangutan).